The following is a 128-amino-acid chain: Holo-[acyl-carrier-protein] synthase (128 aa).

Asp9 and Glu60 together coordinate Mg(2+).

The protein belongs to the P-Pant transferase superfamily. AcpS family. It depends on Mg(2+) as a cofactor.

The protein resides in the cytoplasm. It catalyses the reaction apo-[ACP] + CoA = holo-[ACP] + adenosine 3',5'-bisphosphate + H(+). Functionally, transfers the 4'-phosphopantetheine moiety from coenzyme A to a Ser of acyl-carrier-protein. The chain is Holo-[acyl-carrier-protein] synthase from Buchnera aphidicola subsp. Baizongia pistaciae (strain Bp).